Reading from the N-terminus, the 335-residue chain is Cut9-interacting protein scn1 (335 aa).

The protein belongs to the metallo-dependent hydrolases superfamily.

Its function is as follows. Interacts with cut9. The sequence is that of Cut9-interacting protein scn1 (scn1) from Schizosaccharomyces pombe (strain 972 / ATCC 24843) (Fission yeast).